The chain runs to 391 residues: 1-deoxy-D-xylulose 5-phosphate reductoisomerase (391 aa).

Positions 17, 18, 19, 20, 47, and 130 each coordinate NADPH. 1-deoxy-D-xylulose 5-phosphate is bound at residue lysine 131. Glutamate 132 contributes to the NADPH binding site. Mn(2+) is bound at residue aspartate 156. Serine 157, glutamate 158, serine 182, and histidine 205 together coordinate 1-deoxy-D-xylulose 5-phosphate. Glutamate 158 is a Mn(2+) binding site. An NADPH-binding site is contributed by glycine 211. Positions 218, 223, 224, and 227 each coordinate 1-deoxy-D-xylulose 5-phosphate. Glutamate 227 is a Mn(2+) binding site.

Belongs to the DXR family. Mg(2+) is required as a cofactor. Mn(2+) serves as cofactor.

The catalysed reaction is 2-C-methyl-D-erythritol 4-phosphate + NADP(+) = 1-deoxy-D-xylulose 5-phosphate + NADPH + H(+). It participates in isoprenoid biosynthesis; isopentenyl diphosphate biosynthesis via DXP pathway; isopentenyl diphosphate from 1-deoxy-D-xylulose 5-phosphate: step 1/6. Catalyzes the NADPH-dependent rearrangement and reduction of 1-deoxy-D-xylulose-5-phosphate (DXP) to 2-C-methyl-D-erythritol 4-phosphate (MEP). In Sinorhizobium medicae (strain WSM419) (Ensifer medicae), this protein is 1-deoxy-D-xylulose 5-phosphate reductoisomerase.